The primary structure comprises 371 residues: Bifunctional enzyme IspD/IspF (371 aa).

The tract at residues 1–212 is 2-C-methyl-D-erythritol 4-phosphate cytidylyltransferase; the sequence is MLDISLIMLG…CLIPPSNEHF (212 aa). The tract at residues 212–371 is 2-C-methyl-D-erythritol 2,4-cyclodiphosphate synthase; the sequence is FTGIGFDAHE…ANLKYYDWTK (160 aa). Positions 218 and 220 each coordinate a divalent metal cation. Residues 218-220 and 244-245 each bind 4-CDP-2-C-methyl-D-erythritol 2-phosphate; these read DAH and HS. His252 contributes to the a divalent metal cation binding site. Residues 266 to 268, 271 to 275, 342 to 345, Phe349, and Arg352 contribute to the 4-CDP-2-C-methyl-D-erythritol 2-phosphate site; these read DIG, FPDTD, and TTTE.

This sequence in the N-terminal section; belongs to the IspD/TarI cytidylyltransferase family. IspD subfamily. The protein in the C-terminal section; belongs to the IspF family. Requires a divalent metal cation as cofactor.

The enzyme catalyses 2-C-methyl-D-erythritol 4-phosphate + CTP + H(+) = 4-CDP-2-C-methyl-D-erythritol + diphosphate. It catalyses the reaction 4-CDP-2-C-methyl-D-erythritol 2-phosphate = 2-C-methyl-D-erythritol 2,4-cyclic diphosphate + CMP. It participates in isoprenoid biosynthesis; isopentenyl diphosphate biosynthesis via DXP pathway; isopentenyl diphosphate from 1-deoxy-D-xylulose 5-phosphate: step 2/6. Its pathway is isoprenoid biosynthesis; isopentenyl diphosphate biosynthesis via DXP pathway; isopentenyl diphosphate from 1-deoxy-D-xylulose 5-phosphate: step 4/6. Functionally, bifunctional enzyme that catalyzes the formation of 4-diphosphocytidyl-2-C-methyl-D-erythritol from CTP and 2-C-methyl-D-erythritol 4-phosphate (MEP) (IspD), and catalyzes the conversion of 4-diphosphocytidyl-2-C-methyl-D-erythritol 2-phosphate (CDP-ME2P) to 2-C-methyl-D-erythritol 2,4-cyclodiphosphate (ME-CPP) with a corresponding release of cytidine 5-monophosphate (CMP) (IspF). The polypeptide is Bifunctional enzyme IspD/IspF (Campylobacter curvus (strain 525.92)).